The primary structure comprises 373 residues: tRNA-specific 2-thiouridylase MnmA (373 aa).

Residues 12-19 (GMSGGVDS) and M38 each bind ATP. The tract at residues 98–100 (NPD) is interaction with target base in tRNA. C103 serves as the catalytic Nucleophile. A disulfide bridge links C103 with C200. G127 is a binding site for ATP. The tract at residues 150-152 (KDQ) is interaction with tRNA. The active-site Cysteine persulfide intermediate is C200. The segment at 312 to 313 (RY) is interaction with tRNA.

It belongs to the MnmA/TRMU family.

The protein localises to the cytoplasm. The enzyme catalyses S-sulfanyl-L-cysteinyl-[protein] + uridine(34) in tRNA + AH2 + ATP = 2-thiouridine(34) in tRNA + L-cysteinyl-[protein] + A + AMP + diphosphate + H(+). In terms of biological role, catalyzes the 2-thiolation of uridine at the wobble position (U34) of tRNA, leading to the formation of s(2)U34. In Streptococcus pyogenes serotype M28 (strain MGAS6180), this protein is tRNA-specific 2-thiouridylase MnmA.